A 66-amino-acid chain; its full sequence is Protein I177L (66 aa).

The N-linked (GlcNAc...) asparagine; by host glycan is linked to Asn-11.

It belongs to the asfivirus I177L family.

It localises to the virion. The polypeptide is Protein I177L (African swine fever virus (strain Badajoz 1971 Vero-adapted) (Ba71V)).